Here is a 463-residue protein sequence, read N- to C-terminus: MAQQQTGSRKRKAPAVEADAESSPSQGLAAADGEGPLLLKRQRRPATYRSMAHYLKVREVGGWGPARLQGFDGELRGYAVQRLPELLTERQLELGTVNKVFASQWLNSRQVVCGTKCNTLFVVDVESGHIARIPLLRDSEARLAQDQQGCGIHAIELNPSKTLLATGGENPNSLAIYQLPSLDPLCLGDRHGHKDWIFAVAWLSDTVAVSGSRDGTVALWRMDPDKFDDTVAWHSEVGLPVYAHIRPRDVEAIPRAIINPSNRKVRALACGGKNQELGAVSLDGYFHLWKAGSALSRLLSIRLPYFRDNVCLTYCDDMSVYAVGSHSHVSFLDLRQDQQNIRPLCSREGGTGVRSLSFYRHIITVGTGQGSLLFYDVRAQKFLEERASATLESSSGPARRKLRLACGRGWLNHNDFWVNYFGGMEVFPNALYTHCYNWPEMKLFVAGGPLPAGLHGNYAGLWS.

The disordered stretch occupies residues 1 to 35 (MAQQQTGSRKRKAPAVEADAESSPSQGLAAADGEG). 6 WD repeats span residues 87 to 137 (LTER…PLLR), 138 to 184 (DSEA…SLDP), 185 to 252 (LCLG…DVEA), 253 to 297 (IPRA…ALSR), 298 to 341 (LLSI…QQNI), and 342 to 376 (RPLC…LFYD).

It belongs to the WD repeat DCAF12 family.

This Homo sapiens (Human) protein is DDB1- and CUL4-associated factor 12-like protein 1 (DCAF12L1).